Reading from the N-terminus, the 327-residue chain is Poly(ribitol-phosphate) beta-N-acetylglucosaminyltransferase TarP (327 aa).

UDP-N-acetyl-alpha-D-glucosamine contacts are provided by residues proline 9, aspartate 41, asparagine 68, arginine 76, and 92–94; that span reads DSD. Aspartate 94 is a binding site for Mn(2+). Aspartate 181 serves as the catalytic Proton acceptor.

This sequence belongs to the glycosyltransferase 2 family. As to quaternary structure, homotrimer. It depends on Mn(2+) as a cofactor.

It carries out the reaction 4-O-[(D-ribitylphospho)(n)-di{(2R)-glycerylphospho}]-N-acetyl-beta-D-mannosaminyl-(1-&gt;4)-N-acetyl-alpha-D-glucosaminyl di-trans,octa-cis-undecaprenyl diphosphate + n UDP-N-acetyl-alpha-D-glucosamine = 4-O-([3-N-acetyl-beta-D-glucosaminyl-1-D-ribitylphospho](n)-di{[2R]-1-glycerylphospho})-N-acetyl-beta-D-mannosaminyl-(1-&gt;4)-N-acetyl-alpha-D-glucosaminyl di-trans,octa-cis-undecaprenyl diphosphate + n UDP + n H(+). Its pathway is cell wall biogenesis; poly(ribitol phosphate) teichoic acid biosynthesis. Functionally, attaches beta-O-GlcNAc (beta-O-N-acetyl-D-glucosamine) residues to the C3 position of poly(RboP)-wall teichoic acids (WTAs). Attenuates immunogenicity of WTA and protects S.aureus against adaptative host defenses by allowing bacteria to evade recognition by preexisting anti-S.aureus antibodies. Also protects the cell from podophage infection. This chain is Poly(ribitol-phosphate) beta-N-acetylglucosaminyltransferase TarP, found in Staphylococcus aureus (strain N315).